Reading from the N-terminus, the 342-residue chain is Phosphate acyltransferase (342 aa).

Belongs to the PlsX family. In terms of assembly, homodimer. Probably interacts with PlsY.

Its subcellular location is the cytoplasm. The catalysed reaction is a fatty acyl-[ACP] + phosphate = an acyl phosphate + holo-[ACP]. It participates in lipid metabolism; phospholipid metabolism. In terms of biological role, catalyzes the reversible formation of acyl-phosphate (acyl-PO(4)) from acyl-[acyl-carrier-protein] (acyl-ACP). This enzyme utilizes acyl-ACP as fatty acyl donor, but not acyl-CoA. The sequence is that of Phosphate acyltransferase from Blochmanniella pennsylvanica (strain BPEN).